Reading from the N-terminus, the 407-residue chain is Tryptophan synthase beta chain (407 aa).

K98 carries the N6-(pyridoxal phosphate)lysine modification.

This sequence belongs to the TrpB family. As to quaternary structure, tetramer of two alpha and two beta chains. Pyridoxal 5'-phosphate serves as cofactor.

The catalysed reaction is (1S,2R)-1-C-(indol-3-yl)glycerol 3-phosphate + L-serine = D-glyceraldehyde 3-phosphate + L-tryptophan + H2O. The protein operates within amino-acid biosynthesis; L-tryptophan biosynthesis; L-tryptophan from chorismate: step 5/5. Its function is as follows. The beta subunit is responsible for the synthesis of L-tryptophan from indole and L-serine. The protein is Tryptophan synthase beta chain of Bradyrhizobium sp. (strain ORS 278).